The chain runs to 437 residues: Ribosomal protein uS12 methylthiotransferase RimO (437 aa).

The region spanning 3 to 118 (KKFYITTLGC…AGKILREKFP (116 aa)) is the MTTase N-terminal domain. Cys12, Cys48, Cys81, Cys157, Cys161, and Cys164 together coordinate [4Fe-4S] cluster. The Radical SAM core domain maps to 143–370 (NYSKPYAYVK…RDSHLEILEE (228 aa)). The 65-residue stretch at 373-437 (ESRIGRTYDA…YEYDMNGTWV (65 aa)) folds into the TRAM domain.

The protein belongs to the methylthiotransferase family. RimO subfamily. It depends on [4Fe-4S] cluster as a cofactor.

Its subcellular location is the cytoplasm. It carries out the reaction L-aspartate(89)-[ribosomal protein uS12]-hydrogen + (sulfur carrier)-SH + AH2 + 2 S-adenosyl-L-methionine = 3-methylsulfanyl-L-aspartate(89)-[ribosomal protein uS12]-hydrogen + (sulfur carrier)-H + 5'-deoxyadenosine + L-methionine + A + S-adenosyl-L-homocysteine + 2 H(+). In terms of biological role, catalyzes the methylthiolation of an aspartic acid residue of ribosomal protein uS12. The polypeptide is Ribosomal protein uS12 methylthiotransferase RimO (Leptospira interrogans serogroup Icterohaemorrhagiae serovar Lai (strain 56601)).